The following is a 216-amino-acid chain: Sperm microtubule inner protein 8 (216 aa).

Microtubule inner protein component of sperm flagellar doublet microtubules. As to expression, expressed in testis, prostate and placenta.

It is found in the cytoplasm. The protein resides in the cytoskeleton. It localises to the flagellum axoneme. Microtubule inner protein (MIP) part of the dynein-decorated doublet microtubules (DMTs) in flagellum axoneme. May serve to reinforce and thus stabilize the microtubule structure in the sperm flagella. In Homo sapiens (Human), this protein is Sperm microtubule inner protein 8.